The sequence spans 149 residues: Myosin light chain 1 (149 aa).

3 consecutive EF-hand domains span residues 2–37, 81–116, and 117–149; these read SATR…IGYN, AKTE…LGEK, and LTDA…VLRQ. Ca(2+) contacts are provided by aspartate 15, aspartate 94, threonine 98, lysine 100, and aspartate 105. A Glycyl lysine isopeptide (Lys-Gly) (interchain with G-Cter in ubiquitin) cross-link involves residue lysine 116. Ca(2+) contacts are provided by aspartate 123, lysine 127, and aspartate 132.

As to quaternary structure, interacts with MYO1, MYO2 and IQG1 by binding to their IQ domains. Interacts with SEC4.

The protein resides in the bud neck. Its subcellular location is the bud tip. Its function is as follows. Essential light chain for the class II conventional myosin MYO1. Also acts as light chain for the class V unconventional myosin MYO2 and for IQG1. Involved in the assembly of the contractile actomyosin ring at the bud neck during cytokinesis by recruiting IQG1 to the bud neck. Also required for chitin and MYO2-dependent secretory vesicle deposition to the center of the bud neck for septum formation. May stabilize MYO2 by binding to its IQ domains. Its major function is probably not to regulate MYO1 activity, but rather to coordinate actin ring formation and targeted membrane deposition during cytokinesis via its interactions with MYO1, IQG1 and MYO2. This chain is Myosin light chain 1 (MLC1), found in Saccharomyces cerevisiae (strain ATCC 204508 / S288c) (Baker's yeast).